A 76-amino-acid chain; its full sequence is Esculentin-2MT3 (76 aa).

The signal sequence occupies residues 1–22; the sequence is MFTLKKSMLLLFFLGTISLSLC. The propeptide at 23 to 37 is removed in mature form; it reads EEERNADEDDGEKEV. Cys-70 and Cys-76 are oxidised to a cystine.

It belongs to the frog skin active peptide (FSAP) family. Esculentin subfamily. As to expression, expressed by the skin glands.

It localises to the secreted. In terms of biological role, antimicrobial peptide. The sequence is that of Esculentin-2MT3 from Amolops mantzorum (Sichuan torrent frog).